The sequence spans 227 residues: PKHD-type hydroxylase azo0608 (227 aa).

One can recognise a Fe2OG dioxygenase domain in the interval 78–178 (RVLTPFFNRY…RVACFMFMQS (101 aa)). H97, D99, and H159 together coordinate Fe cation. 2-oxoglutarate is bound at residue R169.

Fe(2+) serves as cofactor. The cofactor is L-ascorbate.

The protein is PKHD-type hydroxylase azo0608 of Azoarcus sp. (strain BH72).